Consider the following 294-residue polypeptide: UPF0761 membrane protein YPTB0027 (294 aa).

Transmembrane regions (helical) follow at residues 44–64 (LLSL…FPMF), 67–87 (ISIK…GDII), 108–128 (GLIV…NIIW), 136–156 (LVFS…LVGA), 185–205 (VFPL…VPTV), 212–232 (ALIG…GFAM), and 246–266 (VLAV…IVLL).

Belongs to the UPF0761 family.

It localises to the cell inner membrane. This is UPF0761 membrane protein YPTB0027 from Yersinia pseudotuberculosis serotype I (strain IP32953).